We begin with the raw amino-acid sequence, 396 residues long: tRNA-specific 2-thiouridylase MnmA (396 aa).

ATP-binding positions include 42–49 and methionine 68; that span reads GMSGGVDS. The segment at 128–130 is interaction with target base in tRNA; the sequence is NPD. Cysteine 133 serves as the catalytic Nucleophile. Residues cysteine 133 and cysteine 230 are joined by a disulfide bond. An ATP-binding site is contributed by glycine 158. The interval 180 to 182 is interaction with tRNA; that stretch reads KDQ. Residue cysteine 230 is the Cysteine persulfide intermediate of the active site. An interaction with tRNA region spans residues 342–343; it reads RY.

Belongs to the MnmA/TRMU family.

The protein resides in the cytoplasm. The catalysed reaction is S-sulfanyl-L-cysteinyl-[protein] + uridine(34) in tRNA + AH2 + ATP = 2-thiouridine(34) in tRNA + L-cysteinyl-[protein] + A + AMP + diphosphate + H(+). Catalyzes the 2-thiolation of uridine at the wobble position (U34) of tRNA, leading to the formation of s(2)U34. This Pseudoalteromonas atlantica (strain T6c / ATCC BAA-1087) protein is tRNA-specific 2-thiouridylase MnmA.